The primary structure comprises 198 residues: Peroxiredoxin-2 (198 aa).

Residue A2 is modified to N-acetylalanine. In terms of domain architecture, Thioredoxin spans 6 to 164; it reads AHIGKPAPDF…ALRLVQAFQY (159 aa). C51 acts as the Cysteine sulfenic acid (-SOH) intermediate in catalysis. A Phosphoserine modification is found at S112. T182 is modified (phosphothreonine). Position 196 is an N6-acetyllysine (K196).

The protein belongs to the peroxiredoxin family. AhpC/Prx1 subfamily. Homodimer; disulfide-linked, upon oxidation. 5 homodimers assemble to form a ring-like decamer. Interacts with TIPIN. Post-translationally, the enzyme can be inactivated by further oxidation of the cysteine sulfenic acid (C(P)-SOH) to sulphinic acid (C(P)-SO2H) instead of its condensation to a disulfide bond. It can be reactivated by forming a transient disulfide bond with sulfiredoxin SRXN1, which reduces the cysteine sulfinic acid in an ATP- and Mg-dependent manner. Acetylation increases resistance to transition to high molecular-mass complexes. Deacetylated by HDAC6 which decreases reducing activity.

It localises to the cytoplasm. It catalyses the reaction a hydroperoxide + [thioredoxin]-dithiol = an alcohol + [thioredoxin]-disulfide + H2O. In terms of biological role, thiol-specific peroxidase that catalyzes the reduction of hydrogen peroxide and organic hydroperoxides to water and alcohols, respectively. Plays a role in cell protection against oxidative stress by detoxifying peroxides and as sensor of hydrogen peroxide-mediated signaling events. Might participate in the signaling cascades of growth factors and tumor necrosis factor-alpha by regulating the intracellular concentrations of H(2)O(2). The sequence is that of Peroxiredoxin-2 (Prdx2) from Rattus norvegicus (Rat).